Reading from the N-terminus, the 357-residue chain is Malonyl CoA reductase (NADP) (357 aa).

An NADP(+)-binding site is contributed by 13–16 (TGLV). The active-site Acyl-thioester intermediate is the Cys-150. 180-181 (SG) serves as a coordination point for NADP(+). The Proton acceptor role is filled by His-245. 332–333 (NT) contacts NADP(+).

Belongs to the aspartate-semialdehyde dehydrogenase family. As to quaternary structure, homotetramer.

It catalyses the reaction 3-oxopropanoate + NADP(+) + CoA = malonyl-CoA + NADPH + H(+). Functionally, catalyzes the reduction of malonyl-CoA to malonate semialdehyde, a key step in the 3-hydroxypropanoate and the 3-hydroxypropanoate/4-hydroxybutyrate cycles. The chain is Malonyl CoA reductase (NADP) from Metallosphaera sedula (strain ATCC 51363 / DSM 5348 / JCM 9185 / NBRC 15509 / TH2).